Consider the following 72-residue polypeptide: Translation initiation factor IF-1 (72 aa).

One can recognise an S1-like domain in the interval 1–72 (MAKEKDTIRT…PTRGRIVYRK (72 aa)).

Belongs to the IF-1 family. Component of the 30S ribosomal translation pre-initiation complex which assembles on the 30S ribosome in the order IF-2 and IF-3, IF-1 and N-formylmethionyl-tRNA(fMet); mRNA recruitment can occur at any time during PIC assembly.

Its subcellular location is the cytoplasm. One of the essential components for the initiation of protein synthesis. Stabilizes the binding of IF-2 and IF-3 on the 30S subunit to which N-formylmethionyl-tRNA(fMet) subsequently binds. Helps modulate mRNA selection, yielding the 30S pre-initiation complex (PIC). Upon addition of the 50S ribosomal subunit IF-1, IF-2 and IF-3 are released leaving the mature 70S translation initiation complex. The sequence is that of Translation initiation factor IF-1 from Thermus thermophilus (strain ATCC BAA-163 / DSM 7039 / HB27).